The chain runs to 399 residues: uncharacterized protein (399 aa).

Transmembrane regions (helical) follow at residues 46–66 (IAPYLITLTGTITILLSFFIV), 76–95 (TLPRWVYAMSGLTLFFYQTM), 139–159 (GVGYISLIQLFITALLPFWMA), 181–201 (IIIIVCALLSTAIFGNAFWTF), 226–246 (LMLNEIIVASLSLPCLITCFF), 262–282 (ILPALKHILVWVIITVSSFIW), 303–323 (VQFSIGIIFGELVSRLILAHM), 330–350 (IIQAPLYPLILSTFCSTINYF), and 352–372 (GTIIIPENLLLILFTVTSFVH).

This sequence belongs to the CDP-alcohol phosphatidyltransferase class-I family.

It is found in the membrane. This is an uncharacterized protein from Dictyostelium discoideum (Social amoeba).